The primary structure comprises 317 residues: Aspartate carbamoyltransferase catalytic subunit (317 aa).

Carbamoyl phosphate contacts are provided by Arg-65 and Thr-66. Lys-93 contributes to the L-aspartate binding site. Positions 115, 145, and 148 each coordinate carbamoyl phosphate. Arg-178 and Arg-233 together coordinate L-aspartate. Residues Gly-274 and Pro-275 each contribute to the carbamoyl phosphate site.

It belongs to the aspartate/ornithine carbamoyltransferase superfamily. ATCase family. As to quaternary structure, heterododecamer (2C3:3R2) of six catalytic PyrB chains organized as two trimers (C3), and six regulatory PyrI chains organized as three dimers (R2).

It carries out the reaction carbamoyl phosphate + L-aspartate = N-carbamoyl-L-aspartate + phosphate + H(+). The protein operates within pyrimidine metabolism; UMP biosynthesis via de novo pathway; (S)-dihydroorotate from bicarbonate: step 2/3. Its function is as follows. Catalyzes the condensation of carbamoyl phosphate and aspartate to form carbamoyl aspartate and inorganic phosphate, the committed step in the de novo pyrimidine nucleotide biosynthesis pathway. This Methylobacillus flagellatus (strain ATCC 51484 / DSM 6875 / VKM B-1610 / KT) protein is Aspartate carbamoyltransferase catalytic subunit.